Here is a 304-residue protein sequence, read N- to C-terminus: N-acetylmuramic acid 6-phosphate etherase (304 aa).

Positions 58–221 (IVDRMKQGGR…TTASMVKMGK (164 aa)) constitute an SIS domain. Residue Glu-86 is the Proton donor of the active site. The active site involves Glu-117.

Belongs to the GCKR-like family. MurNAc-6-P etherase subfamily. In terms of assembly, homodimer.

The enzyme catalyses N-acetyl-D-muramate 6-phosphate + H2O = N-acetyl-D-glucosamine 6-phosphate + (R)-lactate. Its pathway is amino-sugar metabolism; N-acetylmuramate degradation. In terms of biological role, specifically catalyzes the cleavage of the D-lactyl ether substituent of MurNAc 6-phosphate, producing GlcNAc 6-phosphate and D-lactate. The protein is N-acetylmuramic acid 6-phosphate etherase of Clostridioides difficile (strain 630) (Peptoclostridium difficile).